The sequence spans 186 residues: Ribosome-recycling factor (186 aa).

It belongs to the RRF family.

The protein localises to the cytoplasm. Functionally, responsible for the release of ribosomes from messenger RNA at the termination of protein biosynthesis. May increase the efficiency of translation by recycling ribosomes from one round of translation to another. The polypeptide is Ribosome-recycling factor (Pediococcus pentosaceus (strain ATCC 25745 / CCUG 21536 / LMG 10740 / 183-1w)).